Consider the following 94-residue polypeptide: Small ribosomal subunit protein bS6 (94 aa).

This sequence belongs to the bacterial ribosomal protein bS6 family.

In terms of biological role, binds together with bS18 to 16S ribosomal RNA. The chain is Small ribosomal subunit protein bS6 from Desulforudis audaxviator (strain MP104C).